Reading from the N-terminus, the 769-residue chain is Phenylalanine--tRNA ligase beta subunit (769 aa).

The 102-residue stretch at 40 to 141 (GKLLTIARVA…GEPIPGCEPD (102 aa)) folds into the tRNA-binding domain. Residues 389–467 (PAPPPIELPL…RMIGYDSIAP (79 aa)) form the B5 domain. Aspartate 445, aspartate 451, glutamate 454, and glutamate 455 together coordinate Mg(2+). An FDX-ACB domain is found at 676–768 (RRYPSSAFDL…GMRAKGYELR (93 aa)).

Belongs to the phenylalanyl-tRNA synthetase beta subunit family. Type 1 subfamily. As to quaternary structure, tetramer of two alpha and two beta subunits. Mg(2+) is required as a cofactor.

It is found in the cytoplasm. The enzyme catalyses tRNA(Phe) + L-phenylalanine + ATP = L-phenylalanyl-tRNA(Phe) + AMP + diphosphate + H(+). This chain is Phenylalanine--tRNA ligase beta subunit, found in Solibacter usitatus (strain Ellin6076).